Consider the following 349-residue polypeptide: Ferredoxin--NADP reductase 1 (349 aa).

FAD contacts are provided by Glu36, Lys44, Tyr48, Val88, Leu123, Asp290, and Ser331.

It belongs to the ferredoxin--NADP reductase type 2 family. In terms of assembly, homodimer. It depends on FAD as a cofactor.

The catalysed reaction is 2 reduced [2Fe-2S]-[ferredoxin] + NADP(+) + H(+) = 2 oxidized [2Fe-2S]-[ferredoxin] + NADPH. The sequence is that of Ferredoxin--NADP reductase 1 from Lysinibacillus sphaericus (strain C3-41).